Here is a 349-residue protein sequence, read N- to C-terminus: Protein-glutamate methylesterase/protein-glutamine glutaminase (349 aa).

The region spanning 5-122 (RVLSVDDSAL…REGMLAYSEM (118 aa)) is the Response regulatory domain. Asp-56 bears the 4-aspartylphosphate mark. The region spanning 152–344 (LLSSEKLIAI…QQMLAKISAG (193 aa)) is the CheB-type methylesterase domain. Residues Ser-164, His-190, and Asp-286 contribute to the active site.

It belongs to the CheB family. Phosphorylated by CheA. Phosphorylation of the N-terminal regulatory domain activates the methylesterase activity.

The protein localises to the cytoplasm. The enzyme catalyses [protein]-L-glutamate 5-O-methyl ester + H2O = L-glutamyl-[protein] + methanol + H(+). It carries out the reaction L-glutaminyl-[protein] + H2O = L-glutamyl-[protein] + NH4(+). In terms of biological role, involved in chemotaxis. Part of a chemotaxis signal transduction system that modulates chemotaxis in response to various stimuli. Catalyzes the demethylation of specific methylglutamate residues introduced into the chemoreceptors (methyl-accepting chemotaxis proteins or MCP) by CheR. Also mediates the irreversible deamidation of specific glutamine residues to glutamic acid. The protein is Protein-glutamate methylesterase/protein-glutamine glutaminase of Salmonella paratyphi A (strain ATCC 9150 / SARB42).